Reading from the N-terminus, the 216-residue chain is Probable nicotinate-nucleotide adenylyltransferase (216 aa).

Belongs to the NadD family.

It catalyses the reaction nicotinate beta-D-ribonucleotide + ATP + H(+) = deamido-NAD(+) + diphosphate. It participates in cofactor biosynthesis; NAD(+) biosynthesis; deamido-NAD(+) from nicotinate D-ribonucleotide: step 1/1. Functionally, catalyzes the reversible adenylation of nicotinate mononucleotide (NaMN) to nicotinic acid adenine dinucleotide (NaAD). The protein is Probable nicotinate-nucleotide adenylyltransferase of Klebsiella pneumoniae subsp. pneumoniae (strain ATCC 700721 / MGH 78578).